Here is a 498-residue protein sequence, read N- to C-terminus: Acetyl-coenzyme A carboxylase carboxyl transferase subunit beta, chloroplastic (498 aa).

In terms of domain architecture, CoA carboxyltransferase N-terminal spans 228 to 498 (LWVQCEICYG…LNHNLSRTLT (271 aa)). Residues Cys-232, Cys-235, Cys-251, and Cys-254 each coordinate Zn(2+). A C4-type zinc finger spans residues 232–254 (CEICYGLNYKKFFKSKMNICEQC).

The protein belongs to the AccD/PCCB family. As to quaternary structure, acetyl-CoA carboxylase is a heterohexamer composed of biotin carboxyl carrier protein, biotin carboxylase and 2 subunits each of ACCase subunit alpha and ACCase plastid-coded subunit beta (accD). Zn(2+) serves as cofactor.

The protein resides in the plastid. The protein localises to the chloroplast stroma. It catalyses the reaction N(6)-carboxybiotinyl-L-lysyl-[protein] + acetyl-CoA = N(6)-biotinyl-L-lysyl-[protein] + malonyl-CoA. It participates in lipid metabolism; malonyl-CoA biosynthesis; malonyl-CoA from acetyl-CoA: step 1/1. In terms of biological role, component of the acetyl coenzyme A carboxylase (ACC) complex. Biotin carboxylase (BC) catalyzes the carboxylation of biotin on its carrier protein (BCCP) and then the CO(2) group is transferred by the transcarboxylase to acetyl-CoA to form malonyl-CoA. This chain is Acetyl-coenzyme A carboxylase carboxyl transferase subunit beta, chloroplastic, found in Populus alba (White poplar).